The primary structure comprises 73 residues: Antimicrobial peptide lumbricin-PG (73 aa).

The N-terminal stretch at 1 to 14 (MLLTISDFLFLSLT) is a signal peptide. The interval 25 to 48 (RPWSDRKNNYSGPQFTYPPEKAPP) is disordered.

The protein resides in the secreted. In terms of biological role, displays antimicrobial activity against the Gram-positive bacterium S.aureus ATCC 2592, the Gram-negative bacteria E.coli ATCC 25922 and P.aeruginosa ATCC 27853, and the fungus C.albicans ATCC 2002. Displays stronger activity against P.aeruginosa and S.aureus than E.coli. Displays very weak hemolytic activity. The protein is Antimicrobial peptide lumbricin-PG of Metaphire guillelmi (Earthworm).